The following is a 331-amino-acid chain: 5'-AMP-activated protein kinase subunit gamma-1 (331 aa).

The segment covering Met1–Ala12 has biased composition (polar residues). The tract at residues Met1–Asn26 is disordered. CBS domains lie at Pro43–Leu103, Ser125–Glu187, and Ile198–Val260. ADP contacts are provided by residues Arg70, Met85–Asp90, Val130, His151–Arg152, and Lys170. AMP contacts are provided by residues Arg70, Met85–Asp90, Val130, His151, His151–Arg152, Lys170, Thr200, Ala205, Ser226–Ala227, and Ser242–Asp245. ATP contacts are provided by residues Arg70, Met85–Asp90, Val130, His151–Arg152, Arg152, and Lys170. Residues Leu138–Glu159 carry the AMPK pseudosubstrate motif. Ser242–Asp245 serves as a coordination point for ADP. ATP is bound at residue Ser242 to Asp245. The residue at position 261 (Ser261) is a Phosphoserine; by ULK1. Thr263 is subject to Phosphothreonine; by ULK1. Arg269 contacts ADP. Position 269 (Arg269) interacts with AMP. Arg269 is a binding site for ATP. Ser270 bears the Phosphoserine; by ULK1 mark. The CBS 4 domain maps to Tyr272–Lys329. ADP is bound by residues Leu277 and His298 to Arg299. AMP contacts are provided by residues Leu277, His298, His298–Arg299, and Ser314–Asp317. ATP is bound by residues Leu277 and His298–Arg299.

This sequence belongs to the 5'-AMP-activated protein kinase gamma subunit family. As to quaternary structure, AMPK is a heterotrimer of an alpha catalytic subunit (PRKAA1 or PRKAA2), a beta (PRKAB1 or PRKAB2) and a gamma non-catalytic subunits (PRKAG1, PRKAG2 or PRKAG3). Interacts with FNIP1 and FNIP2. Phosphorylated by ULK1 and ULK2; leading to negatively regulate AMPK activity and suggesting the existence of a regulatory feedback loop between ULK1, ULK2 and AMPK. In terms of processing, glycosylated; O-GlcNAcylated by OGT, promoting the AMP-activated protein kinase (AMPK) activity.

Functionally, AMP/ATP-binding subunit of AMP-activated protein kinase (AMPK), an energy sensor protein kinase that plays a key role in regulating cellular energy metabolism. In response to reduction of intracellular ATP levels, AMPK activates energy-producing pathways and inhibits energy-consuming processes: inhibits protein, carbohydrate and lipid biosynthesis, as well as cell growth and proliferation. AMPK acts via direct phosphorylation of metabolic enzymes, and by longer-term effects via phosphorylation of transcription regulators. Also acts as a regulator of cellular polarity by remodeling the actin cytoskeleton; probably by indirectly activating myosin. Gamma non-catalytic subunit mediates binding to AMP, ADP and ATP, leading to activate or inhibit AMPK: AMP-binding results in allosteric activation of alpha catalytic subunit (PRKAA1 or PRKAA2) both by inducing phosphorylation and preventing dephosphorylation of catalytic subunits. ADP also stimulates phosphorylation, without stimulating already phosphorylated catalytic subunit. ATP promotes dephosphorylation of catalytic subunit, rendering the AMPK enzyme inactive. This Homo sapiens (Human) protein is 5'-AMP-activated protein kinase subunit gamma-1 (PRKAG1).